The following is a 404-amino-acid chain: Hemocyanin, beta-C chain unit G (404 aa).

Asn-38 carries an N-linked (GlcNAc...) asparagine glycan. Residue His-50 coordinates Cu cation. Cysteines 56 and 65 form a disulfide. The N-linked (GlcNAc...) asparagine glycan is linked to Asn-60. Position 61 (His-61) interacts with Cu cation. The segment at residues 66–68 (CIH) is a cross-link (2'-(S-cysteinyl)-histidine (Cys-His)). 4 residues coordinate Cu cation: His-77, His-176, His-180, and His-207. Cystine bridges form between Cys-166-Cys-233 and Cys-320-Cys-326. The N-linked (GlcNAc...) asparagine glycan is linked to Asn-378.

This sequence belongs to the tyrosinase family. Hemocyanin subfamily. As to quaternary structure, decamers of large identical subunits (450 kDa), each containing 8 globular oxygen-binding functional units. Cu(2+) serves as cofactor.

Its function is as follows. Hemocyanins are copper-containing oxygen carriers occurring freely dissolved in the hemolymph of many mollusks and arthropods. The sequence is that of Hemocyanin, beta-C chain unit G from Helix pomatia (Roman snail).